The chain runs to 323 residues: CTD kinase subunit beta (323 aa).

This sequence belongs to the cyclin family. In terms of assembly, CTDK-I consists of three subunits, CTK1, CTK2 and CTK3 (also called alpha, beta and gamma). Interacts with CTK1. Heterodimerization with CTK3 is required to protect this subunit from degradation. In terms of processing, phosphorylated. Ubiquitinated. Phosphorylation and ubiquitination lead to degradation in growth-related way by the ubiquitin-proteasome pathway. Neither phosphorylation nor degradation requires association with CTK1.

The protein localises to the nucleus. It is found in the nucleolus. Its function is as follows. Cyclin subunit of the CTDK-I complex, which hyperphosphorylates the C-terminal heptapeptide repeat domain (CTD) of the largest RNA polymerase II subunit. CTDK-I phosphorylates 'Ser-5' if the CTD substrate is not phosphorylated at 'Ser-5', but will phosphorylate 'Ser-2' of a CTD substrate if 'Ser-5' is already phosphorylated. CTDK-I is also more reactive toward substrates that are prephosphorylated at 'Ser-2' or 'Ser-5' compared with an unphosphorylated CTD substrate, therefore efficiently creating doubly phosphorylated CTD repeats. Involved in RNA polymerase II transcriptional elongation, and as part of the CTDK-I complex, pre-mRNA 3'-end processing and SET2 mediated H3K36 methylation. Together with CTK3, required for CTK1 CTD kinase activation. Required for DNA damage induced transcription. Involved in the adaptation to alternative carbon sources, including galactose, glycerol and ethanol, but not raffinose. Required for the integrity of the rDNA locus. This chain is CTD kinase subunit beta (CTK2), found in Saccharomyces cerevisiae (strain ATCC 204508 / S288c) (Baker's yeast).